Consider the following 285-residue polypeptide: Protein unc-1 (285 aa).

2 consecutive transmembrane segments (helical) span residues isoleucine 27–phenylalanine 47 and isoleucine 69–isoleucine 89.

Belongs to the band 7/mec-2 family.

It localises to the cell membrane. Its subcellular location is the cell junction. The protein resides in the gap junction. In Caenorhabditis elegans, this protein is Protein unc-1 (unc-1).